The primary structure comprises 227 residues: Cytochrome c oxidase subunit 2 (227 aa).

Residues 1-14 (MAHPVQLGLQDATS) are Mitochondrial intermembrane-facing. Residues 15-45 (PVMEELITFHDHALMAMSLISLLVLYALFST) traverse the membrane as a helical segment. Residues 46–59 (LTTKLTNTNITDAQ) lie on the Mitochondrial matrix side of the membrane. Residues 60–87 (EMEIIWTILPAIILVLIALPSLRILYLT) form a helical membrane-spanning segment. The Mitochondrial intermembrane segment spans residues 88–227 (DEVNNPSFTI…IFEMGPVFTL (140 aa)). Cu cation-binding residues include histidine 161, cysteine 196, glutamate 198, cysteine 200, histidine 204, and methionine 207. Glutamate 198 contacts Mg(2+).

It belongs to the cytochrome c oxidase subunit 2 family. As to quaternary structure, component of the cytochrome c oxidase (complex IV, CIV), a multisubunit enzyme composed of 14 subunits. The complex is composed of a catalytic core of 3 subunits MT-CO1, MT-CO2 and MT-CO3, encoded in the mitochondrial DNA, and 11 supernumerary subunits COX4I, COX5A, COX5B, COX6A, COX6B, COX6C, COX7A, COX7B, COX7C, COX8 and NDUFA4, which are encoded in the nuclear genome. The complex exists as a monomer or a dimer and forms supercomplexes (SCs) in the inner mitochondrial membrane with NADH-ubiquinone oxidoreductase (complex I, CI) and ubiquinol-cytochrome c oxidoreductase (cytochrome b-c1 complex, complex III, CIII), resulting in different assemblies (supercomplex SCI(1)III(2)IV(1) and megacomplex MCI(2)III(2)IV(2)). Found in a complex with TMEM177, COA6, COX18, COX20, SCO1 and SCO2. Interacts with TMEM177 in a COX20-dependent manner. Interacts with COX20. Interacts with COX16. Requires Cu cation as cofactor.

It localises to the mitochondrion inner membrane. It carries out the reaction 4 Fe(II)-[cytochrome c] + O2 + 8 H(+)(in) = 4 Fe(III)-[cytochrome c] + 2 H2O + 4 H(+)(out). Component of the cytochrome c oxidase, the last enzyme in the mitochondrial electron transport chain which drives oxidative phosphorylation. The respiratory chain contains 3 multisubunit complexes succinate dehydrogenase (complex II, CII), ubiquinol-cytochrome c oxidoreductase (cytochrome b-c1 complex, complex III, CIII) and cytochrome c oxidase (complex IV, CIV), that cooperate to transfer electrons derived from NADH and succinate to molecular oxygen, creating an electrochemical gradient over the inner membrane that drives transmembrane transport and the ATP synthase. Cytochrome c oxidase is the component of the respiratory chain that catalyzes the reduction of oxygen to water. Electrons originating from reduced cytochrome c in the intermembrane space (IMS) are transferred via the dinuclear copper A center (CU(A)) of subunit 2 and heme A of subunit 1 to the active site in subunit 1, a binuclear center (BNC) formed by heme A3 and copper B (CU(B)). The BNC reduces molecular oxygen to 2 water molecules using 4 electrons from cytochrome c in the IMS and 4 protons from the mitochondrial matrix. The chain is Cytochrome c oxidase subunit 2 (MT-CO2) from Cercocebus galeritus (Tana river mangabey).